The following is a 513-amino-acid chain: ATP synthase subunit alpha (513 aa).

ATP is bound at residue 169–176 (GDRQTGKT).

The protein belongs to the ATPase alpha/beta chains family. F-type ATPases have 2 components, CF(1) - the catalytic core - and CF(0) - the membrane proton channel. CF(1) has five subunits: alpha(3), beta(3), gamma(1), delta(1), epsilon(1). CF(0) has three main subunits: a(1), b(2) and c(9-12). The alpha and beta chains form an alternating ring which encloses part of the gamma chain. CF(1) is attached to CF(0) by a central stalk formed by the gamma and epsilon chains, while a peripheral stalk is formed by the delta and b chains.

Its subcellular location is the cell inner membrane. The enzyme catalyses ATP + H2O + 4 H(+)(in) = ADP + phosphate + 5 H(+)(out). Functionally, produces ATP from ADP in the presence of a proton gradient across the membrane. The alpha chain is a regulatory subunit. The chain is ATP synthase subunit alpha from Yersinia enterocolitica serotype O:8 / biotype 1B (strain NCTC 13174 / 8081).